The following is a 200-amino-acid chain: Snake venom serine protease VaSP1 (200 aa).

The Peptidase S1 domain occupies 1-200 (VIGGDECNIN…EIQGIVSYGK (200 aa)). Catalysis depends on charge relay system residues aspartate 88 and serine 182.

As to quaternary structure, monomer. In terms of processing, N-glycosylated. The protein exist in multiple isoforms. As to expression, expressed by the venom gland.

The protein resides in the secreted. Its activity is regulated as follows. Inhibited by Pefabloc (90% inhibition), DTT (90%), Zn(2+) (80%), trypsin inhibitor II (50%), and benzamidine (45%), but not inhibited by EDTA, Ca(2+), Mg(2+) and L-Cys. Snake venom serine protease active on several blood coagulation enzymes. It completely cleaves fibrinogen Aalpha chain (FGA) after 120 minutes, partially cleaves Bbeta chain (FGB) (overnight) and has no activity on gamma chain. It does not release fibrinopeptides A and/or B exclusively, since the enzyme does not provoke fibrin polymerisation. It also degrades fibrin as efficiently as plasmin, and exhibits potent ability to cleave plasminogen and prothrombin, as well as heavy chain of factor X (F10). In vitro, it cleaves insulin B-chain (at positions His38-Leu39, Ala40-Leu41 and Tyr16-Leu17). The protein is Snake venom serine protease VaSP1 of Vipera ammodytes ammodytes (Western sand viper).